A 302-amino-acid polypeptide reads, in one-letter code: tRNA pseudouridine synthase B (302 aa).

Residue Asp43 is the Nucleophile of the active site.

This sequence belongs to the pseudouridine synthase TruB family. Type 1 subfamily.

It catalyses the reaction uridine(55) in tRNA = pseudouridine(55) in tRNA. Functionally, responsible for synthesis of pseudouridine from uracil-55 in the psi GC loop of transfer RNAs. In Burkholderia pseudomallei (strain 668), this protein is tRNA pseudouridine synthase B.